A 773-amino-acid polypeptide reads, in one-letter code: Polyribonucleotide nucleotidyltransferase (773 aa).

Mg(2+) contacts are provided by D532 and D538. The 60-residue stretch at 598–657 folds into the KH domain; that stretch reads PRVITIKVPVDKIGEVIGPKGKVINAITEETGAQISIEDDGTVFVGATDGLSAQAAINKI. Positions 669–738 constitute an S1 motif domain; the sequence is GERFLGTVVK…KRGKISLVLV (70 aa). Residues 749–773 are disordered; the sequence is APADAGAAQEFGSGTAPADAATASS.

Belongs to the polyribonucleotide nucleotidyltransferase family. The cofactor is Mg(2+).

The protein resides in the cytoplasm. It catalyses the reaction RNA(n+1) + phosphate = RNA(n) + a ribonucleoside 5'-diphosphate. Its function is as follows. Involved in mRNA degradation. Catalyzes the phosphorolysis of single-stranded polyribonucleotides processively in the 3'- to 5'-direction. The protein is Polyribonucleotide nucleotidyltransferase of Mycobacterium leprae (strain Br4923).